Reading from the N-terminus, the 299-residue chain is Probable xyloglucan endotransglucosylase/hydrolase protein 10 (299 aa).

Positions 1–29 (MTLINRSKPFVLLVGFSIISSLLLWVSQA) are cleaved as a signal peptide. The 196-residue stretch at 30–225 (SVVSSGDFNK…WSKGPFVASF (196 aa)) folds into the GH16 domain. The N-linked (GlcNAc...) asparagine glycan is linked to N51. The active-site Nucleophile is E111. The Proton donor role is filled by E115. Xyloglucan is bound by residues E115, 128–130 (QTN), 138–140 (NRE), 204–205 (SW), and G209. Cystine bridges form between C233/C242 and C280/C294. N238 is a glycosylation site (N-linked (GlcNAc...) asparagine). R285 provides a ligand contact to xyloglucan.

This sequence belongs to the glycosyl hydrolase 16 family. XTH group 1 subfamily. Post-translationally, contains at least one intrachain disulfide bond essential for its enzymatic activity.

It is found in the secreted. Its subcellular location is the cell wall. The protein localises to the extracellular space. The protein resides in the apoplast. It catalyses the reaction breaks a beta-(1-&gt;4) bond in the backbone of a xyloglucan and transfers the xyloglucanyl segment on to O-4 of the non-reducing terminal glucose residue of an acceptor, which can be a xyloglucan or an oligosaccharide of xyloglucan.. Functionally, catalyzes xyloglucan endohydrolysis (XEH) and/or endotransglycosylation (XET). Cleaves and religates xyloglucan polymers, an essential constituent of the primary cell wall, and thereby participates in cell wall construction of growing tissues. The protein is Probable xyloglucan endotransglucosylase/hydrolase protein 10 (XTH10) of Arabidopsis thaliana (Mouse-ear cress).